The following is a 72-amino-acid chain: Translation initiation factor IF-1 (72 aa).

An S1-like domain is found at 1 to 72; sequence MAKEDAIELQ…SKGRIVFRAR (72 aa).

Belongs to the IF-1 family. As to quaternary structure, component of the 30S ribosomal translation pre-initiation complex which assembles on the 30S ribosome in the order IF-2 and IF-3, IF-1 and N-formylmethionyl-tRNA(fMet); mRNA recruitment can occur at any time during PIC assembly.

The protein localises to the cytoplasm. One of the essential components for the initiation of protein synthesis. Stabilizes the binding of IF-2 and IF-3 on the 30S subunit to which N-formylmethionyl-tRNA(fMet) subsequently binds. Helps modulate mRNA selection, yielding the 30S pre-initiation complex (PIC). Upon addition of the 50S ribosomal subunit IF-1, IF-2 and IF-3 are released leaving the mature 70S translation initiation complex. This Aliivibrio fischeri (strain ATCC 700601 / ES114) (Vibrio fischeri) protein is Translation initiation factor IF-1.